Here is a 302-residue protein sequence, read N- to C-terminus: UDP-3-O-acyl-N-acetylglucosamine deacetylase (302 aa).

Histidine 78, histidine 235, and aspartate 239 together coordinate Zn(2+). The active-site Proton donor is the histidine 262.

The protein belongs to the LpxC family. The cofactor is Zn(2+).

The catalysed reaction is a UDP-3-O-[(3R)-3-hydroxyacyl]-N-acetyl-alpha-D-glucosamine + H2O = a UDP-3-O-[(3R)-3-hydroxyacyl]-alpha-D-glucosamine + acetate. It functions in the pathway glycolipid biosynthesis; lipid IV(A) biosynthesis; lipid IV(A) from (3R)-3-hydroxytetradecanoyl-[acyl-carrier-protein] and UDP-N-acetyl-alpha-D-glucosamine: step 2/6. Its function is as follows. Catalyzes the hydrolysis of UDP-3-O-myristoyl-N-acetylglucosamine to form UDP-3-O-myristoylglucosamine and acetate, the committed step in lipid A biosynthesis. The protein is UDP-3-O-acyl-N-acetylglucosamine deacetylase of Bdellovibrio bacteriovorus (strain ATCC 15356 / DSM 50701 / NCIMB 9529 / HD100).